A 616-amino-acid polypeptide reads, in one-letter code: Chaperone protein HscA (616 aa).

It belongs to the heat shock protein 70 family.

Chaperone involved in the maturation of iron-sulfur cluster-containing proteins. Has a low intrinsic ATPase activity which is markedly stimulated by HscB. Involved in the maturation of IscU. The protein is Chaperone protein HscA of Escherichia coli O45:K1 (strain S88 / ExPEC).